The sequence spans 388 residues: Alcohol dehydrogenase-like 1 (388 aa).

Zn(2+)-binding residues include Cys53, Thr55, His76, Cys106, Cys109, Cys112, Cys120, and Cys185. An alcohol-binding residues include Thr55 and His76. Thr55 lines the NAD(+) pocket. NAD(+) contacts are provided by residues 210 to 215, Asp234, Lys239, 304 to 306, Phe331, and Arg381; these read GLGAVG and LGM.

It belongs to the zinc-containing alcohol dehydrogenase family. Class-III subfamily. In terms of assembly, homodimer. Requires Zn(2+) as cofactor.

The protein resides in the cytoplasm. It carries out the reaction a primary alcohol + NAD(+) = an aldehyde + NADH + H(+). It catalyses the reaction a secondary alcohol + NAD(+) = a ketone + NADH + H(+). This chain is Alcohol dehydrogenase-like 1, found in Arabidopsis thaliana (Mouse-ear cress).